A 172-amino-acid chain; its full sequence is Lipoprotein signal peptidase (172 aa).

The next 4 membrane-spanning stretches (helical) occupy residues 12–32 (TSAA…VILF), 43–63 (VFAY…LVYN), 77–97 (WQRW…CYLL), and 102–122 (GQKM…GNVI). Active-site residues include D132 and D150. Residues 142 to 162 (HWPAFNLADSAITVGAVLLVL) form a helical membrane-spanning segment.

The protein belongs to the peptidase A8 family.

Its subcellular location is the cell inner membrane. It catalyses the reaction Release of signal peptides from bacterial membrane prolipoproteins. Hydrolyzes -Xaa-Yaa-Zaa-|-(S,diacylglyceryl)Cys-, in which Xaa is hydrophobic (preferably Leu), and Yaa (Ala or Ser) and Zaa (Gly or Ala) have small, neutral side chains.. It functions in the pathway protein modification; lipoprotein biosynthesis (signal peptide cleavage). Its function is as follows. This protein specifically catalyzes the removal of signal peptides from prolipoproteins. The protein is Lipoprotein signal peptidase of Paraburkholderia phytofirmans (strain DSM 17436 / LMG 22146 / PsJN) (Burkholderia phytofirmans).